The chain runs to 54 residues: Ovomucoid (54 aa).

In terms of domain architecture, Kazal-like spans 4–54; it reads VDCSEYPKPACTMEHRPLCGSDNQTYDNKCNFCNAVVESNGTLTLSHFGKC. 3 cysteine pairs are disulfide-bonded: C6–C36, C14–C33, and C22–C54. N-linked (GlcNAc...) asparagine glycosylation occurs at N43.

Its subcellular location is the secreted. The sequence is that of Ovomucoid from Guttera pucherani (Eastern crested guineafowl).